A 71-amino-acid polypeptide reads, in one-letter code: Large ribosomal subunit protein bL31 (71 aa).

Zn(2+) contacts are provided by cysteine 16, cysteine 18, cysteine 37, and cysteine 40.

The protein belongs to the bacterial ribosomal protein bL31 family. Type A subfamily. As to quaternary structure, part of the 50S ribosomal subunit. Zn(2+) is required as a cofactor.

Binds the 23S rRNA. This chain is Large ribosomal subunit protein bL31, found in Solidesulfovibrio magneticus (strain ATCC 700980 / DSM 13731 / RS-1) (Desulfovibrio magneticus).